Consider the following 252-residue polypeptide: 2-succinyl-6-hydroxy-2,4-cyclohexadiene-1-carboxylate synthase (252 aa).

The protein belongs to the AB hydrolase superfamily. MenH family. Monomer.

It carries out the reaction 5-enolpyruvoyl-6-hydroxy-2-succinyl-cyclohex-3-ene-1-carboxylate = (1R,6R)-6-hydroxy-2-succinyl-cyclohexa-2,4-diene-1-carboxylate + pyruvate. It participates in quinol/quinone metabolism; 1,4-dihydroxy-2-naphthoate biosynthesis; 1,4-dihydroxy-2-naphthoate from chorismate: step 3/7. Its pathway is quinol/quinone metabolism; menaquinone biosynthesis. Its function is as follows. Catalyzes a proton abstraction reaction that results in 2,5-elimination of pyruvate from 2-succinyl-5-enolpyruvyl-6-hydroxy-3-cyclohexene-1-carboxylate (SEPHCHC) and the formation of 2-succinyl-6-hydroxy-2,4-cyclohexadiene-1-carboxylate (SHCHC). This Shigella flexneri serotype 5b (strain 8401) protein is 2-succinyl-6-hydroxy-2,4-cyclohexadiene-1-carboxylate synthase.